A 194-amino-acid polypeptide reads, in one-letter code: MSRVLALKSSILGDYSQSNKLVEDFIKNVDQDKLTVRDLAANPLPVLDFAVATALRATEDLSQEQQAVVDLSDTLIEEVKAADTLVIAAPMYNFTIPTQLKNWIDLIARAGVTFKYTENGVQGLIEGKKAIVVTTRGGIHKDSPTDNVTPYLRTVLGFVGITDVEFIYAEALNMGEDAASKGISDAQSQLATMA.

FMN is bound by residues Ser10, 16–18 (SQS), 91–94 (MYNF), and 135–138 (TRGG).

It belongs to the azoreductase type 1 family. In terms of assembly, homodimer. The cofactor is FMN.

The enzyme catalyses 2 a quinone + NADH + H(+) = 2 a 1,4-benzosemiquinone + NAD(+). It catalyses the reaction N,N-dimethyl-1,4-phenylenediamine + anthranilate + 2 NAD(+) = 2-(4-dimethylaminophenyl)diazenylbenzoate + 2 NADH + 2 H(+). Its function is as follows. Quinone reductase that provides resistance to thiol-specific stress caused by electrophilic quinones. Functionally, also exhibits azoreductase activity. Catalyzes the reductive cleavage of the azo bond in aromatic azo compounds to the corresponding amines. The protein is FMN-dependent NADH:quinone oxidoreductase of Vibrio parahaemolyticus serotype O3:K6 (strain RIMD 2210633).